We begin with the raw amino-acid sequence, 305 residues long: tRNA dimethylallyltransferase (305 aa).

14–21 (GPTASGKS) contacts ATP. 16 to 21 (TASGKS) contributes to the substrate binding site. The segment at 39–42 (DSMQ) is interaction with substrate tRNA.

This sequence belongs to the IPP transferase family. Monomer. Mg(2+) is required as a cofactor.

The enzyme catalyses adenosine(37) in tRNA + dimethylallyl diphosphate = N(6)-dimethylallyladenosine(37) in tRNA + diphosphate. Catalyzes the transfer of a dimethylallyl group onto the adenine at position 37 in tRNAs that read codons beginning with uridine, leading to the formation of N6-(dimethylallyl)adenosine (i(6)A). This Bradyrhizobium sp. (strain BTAi1 / ATCC BAA-1182) protein is tRNA dimethylallyltransferase.